Consider the following 239-residue polypeptide: Probable transcriptional regulatory protein YeeI (239 aa).

Belongs to the TACO1 family. YeeN subfamily.

The protein resides in the cytoplasm. The chain is Probable transcriptional regulatory protein YeeI (yeeI) from Bacillus subtilis (strain 168).